A 300-amino-acid polypeptide reads, in one-letter code: Formamidopyrimidine-DNA glycosylase (300 aa).

Residue Pro2 is the Schiff-base intermediate with DNA of the active site. The active-site Proton donor is the Glu3. Lys60 serves as the catalytic Proton donor; for beta-elimination activity. Residues His108, Arg136, and Arg181 each coordinate DNA. Residues Trp266–Lys300 form an FPG-type zinc finger. Arg290 (proton donor; for delta-elimination activity) is an active-site residue.

Belongs to the FPG family. In terms of assembly, monomer. Zn(2+) serves as cofactor.

The enzyme catalyses Hydrolysis of DNA containing ring-opened 7-methylguanine residues, releasing 2,6-diamino-4-hydroxy-5-(N-methyl)formamidopyrimidine.. It carries out the reaction 2'-deoxyribonucleotide-(2'-deoxyribose 5'-phosphate)-2'-deoxyribonucleotide-DNA = a 3'-end 2'-deoxyribonucleotide-(2,3-dehydro-2,3-deoxyribose 5'-phosphate)-DNA + a 5'-end 5'-phospho-2'-deoxyribonucleoside-DNA + H(+). Functionally, involved in base excision repair of DNA damaged by oxidation or by mutagenic agents. Acts as a DNA glycosylase that recognizes and removes damaged bases. Has a preference for oxidized purines, such as 7,8-dihydro-8-oxoguanine (8-oxoG). Has AP (apurinic/apyrimidinic) lyase activity and introduces nicks in the DNA strand. Cleaves the DNA backbone by beta-delta elimination to generate a single-strand break at the site of the removed base with both 3'- and 5'-phosphates. This Trichodesmium erythraeum (strain IMS101) protein is Formamidopyrimidine-DNA glycosylase.